The primary structure comprises 293 residues: Cytidine deaminase 6 (293 aa).

CMP/dCMP-type deaminase domains follow at residues 16-147 (RGPS…FGPD) and 178-293 (EDCS…TNKN). 57 to 59 (NVE) lines the substrate pocket. His70 contacts Zn(2+). Glu72 functions as the Proton donor in the catalytic mechanism. The Zn(2+) site is built by Cys103 and Cys106.

Belongs to the cytidine and deoxycytidylate deaminase family. As to quaternary structure, homodimer. Requires Zn(2+) as cofactor.

The catalysed reaction is cytidine + H2O + H(+) = uridine + NH4(+). It carries out the reaction 2'-deoxycytidine + H2O + H(+) = 2'-deoxyuridine + NH4(+). In terms of biological role, this enzyme scavenges exogenous and endogenous cytidine and 2'-deoxycytidine for UMP synthesis. The sequence is that of Cytidine deaminase 6 (CDA6) from Arabidopsis thaliana (Mouse-ear cress).